A 255-amino-acid chain; its full sequence is EEF1A lysine methyltransferase 4 (255 aa).

S-adenosyl-L-methionine contacts are provided by W26 and Y30. A Phosphotyrosine modification is found at Y39. S-adenosyl-L-methionine contacts are provided by residues W41, G66, D88 to Y89, D113 to V114, and K130. The Required for methyltransferase activity motif lies at E129–D134.

The protein belongs to the methyltransferase superfamily.

The catalysed reaction is L-lysyl-[protein] + S-adenosyl-L-methionine = N(6)-methyl-L-lysyl-[protein] + S-adenosyl-L-homocysteine + H(+). The enzyme catalyses N(6)-methyl-L-lysyl-[protein] + S-adenosyl-L-methionine = N(6),N(6)-dimethyl-L-lysyl-[protein] + S-adenosyl-L-homocysteine + H(+). It catalyses the reaction N(6),N(6)-dimethyl-L-lysyl-[protein] + S-adenosyl-L-methionine = N(6),N(6),N(6)-trimethyl-L-lysyl-[protein] + S-adenosyl-L-homocysteine + H(+). In terms of biological role, protein-lysine methyltransferase that efficiently catalyzes three successive methylations on 'Lys-36' in eukaryotic translation elongation factor 1 alpha (EEF1A1 or EEF1A2). The chain is EEF1A lysine methyltransferase 4 from Bos taurus (Bovine).